A 264-amino-acid polypeptide reads, in one-letter code: 3-methyl-2-oxobutanoate hydroxymethyltransferase (264 aa).

Mg(2+)-binding residues include D45 and D84. 3-methyl-2-oxobutanoate contacts are provided by residues 45 to 46 (DS), D84, and K112. Residue E114 participates in Mg(2+) binding. E181 functions as the Proton acceptor in the catalytic mechanism.

It belongs to the PanB family. Homodecamer; pentamer of dimers. Requires Mg(2+) as cofactor.

Its subcellular location is the cytoplasm. The enzyme catalyses 3-methyl-2-oxobutanoate + (6R)-5,10-methylene-5,6,7,8-tetrahydrofolate + H2O = 2-dehydropantoate + (6S)-5,6,7,8-tetrahydrofolate. It participates in cofactor biosynthesis; (R)-pantothenate biosynthesis; (R)-pantoate from 3-methyl-2-oxobutanoate: step 1/2. Functionally, catalyzes the reversible reaction in which hydroxymethyl group from 5,10-methylenetetrahydrofolate is transferred onto alpha-ketoisovalerate to form ketopantoate. This Escherichia coli O157:H7 protein is 3-methyl-2-oxobutanoate hydroxymethyltransferase.